We begin with the raw amino-acid sequence, 209 residues long: Germin-like protein (209 aa).

Residues 1–18 (MIVPIFFLFSLLFSSSHG) form the signal peptide. C24 and C39 are oxidised to a cystine. In terms of domain architecture, Cupin type-1 spans 53–199 (SGLGITGNTT…ASFLDPAEIK (147 aa)). N-linked (GlcNAc...) asparagine glycosylation is present at N60. Mn(2+) is bound by residues H101, H103, E108, and H147.

The protein localises to the secreted. Its subcellular location is the extracellular space. It is found in the apoplast. Functionally, has antibacterial activity against B.subtilis (MIC=5 ug), B.cereus (MIC=50 ug), A.hydrophila (MIC=2.5 ug), S.marcescens(MIC=10 ug), S.enterica (MIC=10 ug), P.entomophila (MIC=2.5 ug) and P.rhodesiae (MIC=10 ug). Has antifungal activity against F.solani KACC 40384 and F.oxysporum KACC 40032. Probably has no oxalate oxidase activity even if the active site is conserved. This chain is Germin-like protein, found in Morus alba (White mulberry).